A 377-amino-acid polypeptide reads, in one-letter code: Tubulin--tyrosine ligase (377 aa).

Residues 3–370 (TFVVRDENSS…PPDVEQPQTQ (368 aa)) enclose the TTL domain.

This sequence belongs to the tubulin--tyrosine ligase family. Monomer. Mg(2+) is required as a cofactor. The cofactor is K(+).

The catalysed reaction is C-terminal L-alpha-aminoacyl-L-glutamyl-L-glutamyl-[tubulin] + L-tyrosine + ATP = C-terminal L-alpha-aminoacyl-L-glutamyl-L-glutamyl-L-tyrosyl-[tubulin] + ADP + phosphate + H(+). Functionally, catalyzes the post-translational addition of a tyrosine to the C-terminal end of detyrosinated alpha-tubulin. This chain is Tubulin--tyrosine ligase (TTL), found in Homo sapiens (Human).